The chain runs to 762 residues: Ribosome-releasing factor 2, mitochondrial (762 aa).

A mitochondrion-targeting transit peptide spans 1–35; the sequence is MLLSLTFPVLRGCTGHLVNRSLQAPRWRVTWKRSY. The 288-residue stretch at 54–341 folds into the tr-type G domain; that stretch reads SKIRNIGIMA…AITAYLPAPN (288 aa). GTP contacts are provided by residues 63-70, 127-131, and 181-184; these read AHIDAGKT, DTPGH, and NKMD.

Belongs to the TRAFAC class translation factor GTPase superfamily. Classic translation factor GTPase family. EF-G/EF-2 subfamily.

It localises to the mitochondrion. It carries out the reaction GTP + H2O = GDP + phosphate + H(+). Its function is as follows. Mitochondrial GTPase that mediates the disassembly of ribosomes from messenger RNA at the termination of mitochondrial protein biosynthesis. Acts in collaboration with mrrf. GTP hydrolysis follows the ribosome disassembly and probably occurs on the ribosome large subunit. Not involved in the GTP-dependent ribosomal translocation step during translation elongation. This is Ribosome-releasing factor 2, mitochondrial (gfm2) from Danio rerio (Zebrafish).